The primary structure comprises 291 residues: MSCQPFTSTDTFIPLNSESSATLPLIMHPSAAECLPVSNHATNVMSTATGLHYSVPSCHYGNQSSTYGVMAGSLTPCLYEFPDHTLSHGFPPMHQPLLSEDPTAADFKQELRRKSKLIEEPIDMDSPEIRELEKFANEFKVRRIKLGYTQTNVGEALAAVHGSEFSQTTICRFENLQLSFKNACKLKAILFKWLEEAEQVGALYNEKVGANERKRKRRTTISIAAKDALERHFGEQNKPSSQEILRMAEELNLEKEVVRVWFCNRRQREKRVKTSLNQSLFPNSKEHLECR.

A 9aaTAD motif is present at residues 5 to 13; the sequence is PFTSTDTFI. In terms of domain architecture, POU-specific spans 124 to 198; that stretch reads MDSPEIRELE…ILFKWLEEAE (75 aa). The homeobox DNA-binding region spans 214-273; it reads KRKRRTTISIAAKDALERHFGEQNKPSSQEILRMAEELNLEKEVVRVWFCNRRQREKRVK.

This sequence belongs to the POU transcription factor family. Class-1 subfamily. Interacts with PITX1. Interacts with LHX3. Interacts with ELK1.

The protein resides in the nucleus. Its function is as follows. Transcription factor involved in the specification of the lactotrope, somatotrope, and thyrotrope phenotypes in the developing anterior pituitary. Activates growth hormone and prolactin genes. Specifically binds to the consensus sequence 5'-TAAAT-3'. The protein is Pituitary-specific positive transcription factor 1 (POU1F1) of Ovis aries (Sheep).